The primary structure comprises 255 residues: Methionine aminopeptidase (255 aa).

His76 is a binding site for substrate. Residues Asp93, Asp104, and His167 each contribute to the a divalent metal cation site. His174 is a substrate binding site. 2 residues coordinate a divalent metal cation: Glu201 and Glu232.

Belongs to the peptidase M24A family. Methionine aminopeptidase type 1 subfamily. Monomer. The cofactor is Co(2+). Zn(2+) serves as cofactor. It depends on Mn(2+) as a cofactor. Fe(2+) is required as a cofactor.

The enzyme catalyses Release of N-terminal amino acids, preferentially methionine, from peptides and arylamides.. In terms of biological role, removes the N-terminal methionine from nascent proteins. The N-terminal methionine is often cleaved when the second residue in the primary sequence is small and uncharged (Met-Ala-, Cys, Gly, Pro, Ser, Thr, or Val). Requires deformylation of the N(alpha)-formylated initiator methionine before it can be hydrolyzed. The sequence is that of Methionine aminopeptidase from Treponema pallidum (strain Nichols).